The primary structure comprises 476 residues: Transcription factor Sox-9-B (476 aa).

Disordered stretches follow at residues methionine 1–glutamate 67, glutamate 157–histidine 197, and alanine 209–valine 274. Low complexity predominate over residues serine 30–serine 41. Residues aspartate 42–threonine 52 show a composition bias toward polar residues. Basic and acidic residues-rich tracts occupy residues glycine 56 to glutamate 67 and glutamate 157 to tyrosine 174. A Glycyl lysine isopeptide (Lys-Gly) (interchain with G-Cter in SUMO) cross-link involves residue lysine 61. Positions valine 105–lysine 173 form a DNA-binding region, HMG box. Residues serine 211 to glutamate 220 show a composition bias toward polar residues. 2 short sequence motifs (9aaTAD) span residues isoleucine 276 to serine 285 and aspartate 291 to leucine 299. The segment at tyrosine 318–glutamine 383 is disordered. A compositionally biased stretch (low complexity) spans glycine 319 to glutamine 344. Residues histidine 345 to arginine 360 are compositionally biased toward polar residues. Residue lysine 364 forms a Glycyl lysine isopeptide (Lys-Gly) (interchain with G-Cter in SUMO) linkage. Residues serine 369 to glutamine 383 are compositionally biased toward low complexity. Residues serine 427 to tyrosine 435 carry the 9aaTAD 3 motif. The tract at residues methionine 443–proline 476 is disordered. Residues glycine 452–proline 476 are compositionally biased toward polar residues.

In terms of assembly, interacts with the sumoylation factors ube2i/ubc9 and sumo1. In terms of processing, sumoylated. Lys-364 is the major site of sumoylation, although sumoylation at Lys-61 also occurs. Sumoylation plays a key role in regulating formation of the neural crest and otic placode.

It localises to the nucleus. The protein resides in the cytoplasm. Functionally, transcription factor that plays a key role in chondrocytes differentiation and skeletal development. Specifically binds the 5'-ACAAAG-3' DNA motif present in enhancers and super-enhancers and promotes expression of genes important for chondrogenesis, including COL2A1. Plays a central role in successive steps of chondrocyte differentiation. Absolutely required for precartilaginous condensation, the first step in chondrogenesis during which skeletal progenitors differentiate into prechondrocytes. Together with SOX5 and SOX6, required for overt chondrogenesis when condensed prechondrocytes differentiate into early stage chondrocytes, the second step in chondrogenesis. Later, required to direct hypertrophic maturation and block osteoblast differentiation of growth plate chondrocytes: maintains chondrocyte columnar proliferation, delays prehypertrophy and then prevents osteoblastic differentiation of chondrocytes. Also required for chondrocyte hypertrophy, both indirectly, by keeping the lineage fate of chondrocytes, and directly, by remaining present in upper hypertrophic cells. Low lipid levels are the main nutritional determinant for chondrogenic commitment of skeletal progenitor cells: when lipids levels are low, FOXO transcription factors promote expression of SOX9, which induces chondrogenic commitment and suppresses fatty acid oxidation. In addition to cartilage development, also acts as a regulator of proliferation and differentiation in epithelial stem/progenitor cells. This chain is Transcription factor Sox-9-B (sox9-b), found in Xenopus laevis (African clawed frog).